The sequence spans 156 residues: Small ribosomal subunit protein uS7 (156 aa).

Belongs to the universal ribosomal protein uS7 family. In terms of assembly, part of the 30S ribosomal subunit. Contacts proteins S9 and S11.

In terms of biological role, one of the primary rRNA binding proteins, it binds directly to 16S rRNA where it nucleates assembly of the head domain of the 30S subunit. Is located at the subunit interface close to the decoding center, probably blocks exit of the E-site tRNA. The protein is Small ribosomal subunit protein uS7 of Nitrosococcus oceani (strain ATCC 19707 / BCRC 17464 / JCM 30415 / NCIMB 11848 / C-107).